Here is a 250-residue protein sequence, read N- to C-terminus: MANLRIEVISLFPEMFSAISEYGITSRAVKQGLLQLTCWNPRDYTTDRHHTVDDRPFGGGPGMVMKIKPLEDALAQAKAAAGEKAKVIYLSPQGRQLKQAGVRELANEEALILIAGRYEGIDERFIEAHVDEEWSIGDYVLSGGELPAMVLIDAVTRLLPGALGHADSAEEDSFTDGLLDCPHYTRPEVYADQRVPDVLLSGNHAHIRRWRLQQSLGRTYERRADLLESRSLSGEEKKLLEEYILARDDS.

S-adenosyl-L-methionine-binding positions include glycine 116 and 136-141 (IGDYVL).

This sequence belongs to the RNA methyltransferase TrmD family. Homodimer.

It is found in the cytoplasm. It carries out the reaction guanosine(37) in tRNA + S-adenosyl-L-methionine = N(1)-methylguanosine(37) in tRNA + S-adenosyl-L-homocysteine + H(+). Functionally, specifically methylates guanosine-37 in various tRNAs. This chain is tRNA (guanine-N(1)-)-methyltransferase, found in Pseudomonas fluorescens (strain SBW25).